The chain runs to 828 residues: Periplasmic nitrate reductase (828 aa).

A signal peptide (tat-type signal) is located at residues 1-31 (MKLSRRSFMKANAVAAAAAAAGLSVPGVARA). The 4Fe-4S Mo/W bis-MGD-type domain maps to 39–95 (IKWDKAPCRFCGTGCGVLVGTQQGRVVACQGDPDAPVNRGLNCIKGYFLPKIMYGKD). The [4Fe-4S] cluster site is built by cysteine 46, cysteine 49, cysteine 53, and cysteine 81. Mo-bis(molybdopterin guanine dinucleotide)-binding positions include lysine 83, glutamine 150, asparagine 175, cysteine 179, 212-219 (WGANMAEM), 243-247 (STYQH), 262-264 (QSD), methionine 372, glutamine 376, asparagine 482, 508-509 (SD), lysine 531, aspartate 558, and 718-727 (TGRVLEHWHT). Substrate is bound at residue phenylalanine 794. 2 residues coordinate Mo-bis(molybdopterin guanine dinucleotide): asparagine 802 and lysine 819.

It belongs to the prokaryotic molybdopterin-containing oxidoreductase family. NasA/NapA/NarB subfamily. As to quaternary structure, component of the periplasmic nitrate reductase NapAB complex composed of NapA and NapB. [4Fe-4S] cluster serves as cofactor. Requires Mo-bis(molybdopterin guanine dinucleotide) as cofactor. In terms of processing, predicted to be exported by the Tat system. The position of the signal peptide cleavage has not been experimentally proven.

It is found in the periplasm. It catalyses the reaction 2 Fe(II)-[cytochrome] + nitrate + 2 H(+) = 2 Fe(III)-[cytochrome] + nitrite + H2O. Its function is as follows. Catalytic subunit of the periplasmic nitrate reductase complex NapAB. Receives electrons from NapB and catalyzes the reduction of nitrate to nitrite. The protein is Periplasmic nitrate reductase of Shigella flexneri.